Reading from the N-terminus, the 202-residue chain is LexA repressor (202 aa).

A DNA-binding region (H-T-H motif) is located at residues 27–47 (RAEIAAELGFRSANAAEEHLR). Residues Ser-119 and Lys-156 each act as for autocatalytic cleavage activity in the active site.

This sequence belongs to the peptidase S24 family. As to quaternary structure, homodimer.

The enzyme catalyses Hydrolysis of Ala-|-Gly bond in repressor LexA.. Functionally, represses a number of genes involved in the response to DNA damage (SOS response), including recA and lexA. In the presence of single-stranded DNA, RecA interacts with LexA causing an autocatalytic cleavage which disrupts the DNA-binding part of LexA, leading to derepression of the SOS regulon and eventually DNA repair. The chain is LexA repressor from Marinobacter nauticus (strain ATCC 700491 / DSM 11845 / VT8) (Marinobacter aquaeolei).